Here is a 538-residue protein sequence, read N- to C-terminus: MIETTKGGSGSYPIKTIVVLVQENRSFDHTLGWFKELNREIDGVTKSDPKSNTVSSSDTNSLRVVFGDQSQYVNPDPGHSIQDIYEQVFGKPWDSGKPDPNPGHPNMSGFAQNAERNKKGMSSAVMNGFKPNALPVYKELVQNFAICDRWFASVPASTQPNRLYVHSATSHGATSNDKKLLLEGFPQKTIFESLDEAGFSFGIYYQFPPSTLFYRNLRKLKYLTHFHQYGIQFKKDCKEGKLPNYVVVEQRWFDLLSTPANDDHPSHDVSEGQKLVKEVYEALRSSPQWNEILFIITYDEHGGFYDHVPTPVDGVPNPDGILGPPPYNFEFNRLGVRVPTFFISPWIEPGTVIHGPNGPYPRSQYEHSSIPATVKTIFKLKDFLSKRDSWAGTFESVITRDSPRQDCPETLSTPIKLRGTMAKENAQLSEFQEDLVIMAAGLKGDYKNEELIHKLCKETCVADASKYVTNAFEKFLEESRKARDRGCDENDIVYCVDDDDDHVVIPPQSHSEASNAAAQPKTQTSFFNKLFSCFIRHD.

The disordered stretch occupies residues 91–112; sequence KPWDSGKPDPNPGHPNMSGFAQ.

Belongs to the bacterial phospholipase C family. In terms of tissue distribution, expressed in root tips, cotyledons, on leaf margins, stems, young anthers and funiculus.

The protein resides in the cell membrane. The catalysed reaction is a 1,2-diacyl-sn-glycero-3-phosphocholine + H2O = phosphocholine + a 1,2-diacyl-sn-glycerol + H(+). Non-specific phospholipase C (PLC) which assumes major PLC activity during inorganic phosphate starvation. Substrate preference is phosphatidylcholine (PC), but can also hydrolyze phosphatidylethanolamine (PE) with lower efficiency. Has no activity toward phosphatidic acid (PA). Plays an important role in the supply of both inorganic phosphate and diacylglycerol from membrane-localized phospholipids during phosphate deprivation. May be required for lipid-derived signaling molecules that positively modulate abscisic acid (ABA) response and promote plant tolerance to drought and salt stresses. May be involved in brassinolide-mediated signaling in root development. The protein is Non-specific phospholipase C4 (NPC4) of Arabidopsis thaliana (Mouse-ear cress).